The following is a 963-amino-acid chain: Iron-responsive element-binding protein 2 (963 aa).

Cys512, Cys578, and Cys581 together coordinate [4Fe-4S] cluster.

The protein belongs to the aconitase/IPM isomerase family. As to quaternary structure, interacts with RBCK1 only in iron-rich conditions. Interacts (when associated with the 4Fe-4S) with FBXL5. Interacts with CIAO1 and CIAO2A. The cofactor is [4Fe-4S] cluster. Post-translationally, ubiquitinated and degraded by the proteasome in presence of high level of iron and oxygen. Ubiquitinated by a SCF complex containing FBXL5. Upon iron and oxygen depletion FBXL5 is degraded, preventing ubiquitination and allowing its RNA-binding activity.

The protein resides in the cytoplasm. Its function is as follows. RNA-binding protein that binds to iron-responsive elements (IRES), which are stem-loop structures found in the 5'-UTR of ferritin, and delta aminolevulinic acid synthase mRNAs, and in the 3'-UTR of transferrin receptor mRNA. Binding to the IRE element in ferritin results in the repression of its mRNA translation. Binding of the protein to the transferrin receptor mRNA inhibits the degradation of this otherwise rapidly degraded mRNA. The chain is Iron-responsive element-binding protein 2 (Ireb2) from Mus musculus (Mouse).